Reading from the N-terminus, the 193-residue chain is Dihydrofolate reductase (193 aa).

The DHFR domain maps to 1 to 193 (MIKLVFRYSP…VTTLTESVYK (193 aa)). NADP(+) is bound by residues R7, 22-27 (FGLGDG), 52-55 (GAKT), and 73-77 (DLARD).

The protein belongs to the dihydrofolate reductase family.

The enzyme catalyses (6S)-5,6,7,8-tetrahydrofolate + NADP(+) = 7,8-dihydrofolate + NADPH + H(+). Its pathway is cofactor biosynthesis; tetrahydrofolate biosynthesis; 5,6,7,8-tetrahydrofolate from 7,8-dihydrofolate: step 1/1. Key enzyme in folate metabolism. Catalyzes an essential reaction for de novo glycine and purine synthesis, and for DNA precursor synthesis. This chain is Dihydrofolate reductase (frd), found in Escherichia coli (Bacteriophage T4).